The chain runs to 167 residues: Ribosome maturation factor RimM (167 aa).

The PRC barrel domain maps to 93-165; that stretch reads KGVYYDFQLI…QVIIDPIPGL (73 aa).

The protein belongs to the RimM family. Binds ribosomal protein uS19.

The protein localises to the cytoplasm. Its function is as follows. An accessory protein needed during the final step in the assembly of 30S ribosomal subunit, possibly for assembly of the head region. Essential for efficient processing of 16S rRNA. May be needed both before and after RbfA during the maturation of 16S rRNA. It has affinity for free ribosomal 30S subunits but not for 70S ribosomes. The polypeptide is Ribosome maturation factor RimM (Dehalococcoides mccartyi (strain ATCC BAA-2266 / KCTC 15142 / 195) (Dehalococcoides ethenogenes (strain 195))).